The following is a 155-amino-acid chain: 3-hydroxyacyl-[acyl-carrier-protein] dehydratase FabZ (155 aa).

The active site involves histidine 57.

It belongs to the thioester dehydratase family. FabZ subfamily.

Its subcellular location is the cytoplasm. It carries out the reaction a (3R)-hydroxyacyl-[ACP] = a (2E)-enoyl-[ACP] + H2O. Its function is as follows. Involved in unsaturated fatty acids biosynthesis. Catalyzes the dehydration of short chain beta-hydroxyacyl-ACPs and long chain saturated and unsaturated beta-hydroxyacyl-ACPs. The protein is 3-hydroxyacyl-[acyl-carrier-protein] dehydratase FabZ of Sorangium cellulosum (strain So ce56) (Polyangium cellulosum (strain So ce56)).